Reading from the N-terminus, the 562-residue chain is Serine/threonine-protein kinase STN7, chloroplastic (562 aa).

The transit peptide at 1 to 45 (MATISPGGAYIGTPSPFLGKKLKPFSLTSPILSFKPTVKLNSSCR) directs the protein to the chloroplast. The region spanning 134–452 (FVVGKKLGEG…AKAALAHPYF (319 aa)) is the Protein kinase domain. ATP contacts are provided by residues 140–148 (LGEGSFGVV) and Lys167. Asp279 functions as the Proton acceptor in the catalytic mechanism. Ser526 carries the post-translational modification Phosphoserine. Thr537 and Thr541 each carry phosphothreonine.

This sequence belongs to the protein kinase superfamily. Ser/Thr protein kinase family. In terms of processing, phosphorylated.

The protein localises to the plastid. The protein resides in the chloroplast thylakoid membrane. It catalyses the reaction L-seryl-[protein] + ATP = O-phospho-L-seryl-[protein] + ADP + H(+). The enzyme catalyses L-threonyl-[protein] + ATP = O-phospho-L-threonyl-[protein] + ADP + H(+). Its function is as follows. Serine/threonine protein kinase required for state transition by phosphorylating light-harvesting complex II outer antennae (LCHII). State transition plays a central role in response to environmental changes and allows to adjust to changing light conditions via the redistribution of light excitation energy between photosystem II (PSII) and photosystem I (PSI). Phosphorylates the minor light harvesting protein LHCB4.2/CP29 and is involved in the light-dependent phosphorylation of TSP9. Acts as a key component of the long-term response (LTR) signaling pathway. Mediates phosphorylation-dependent PTAC16 subcellular localization to regulate plastid gene expression. This chain is Serine/threonine-protein kinase STN7, chloroplastic (STN7), found in Arabidopsis thaliana (Mouse-ear cress).